Consider the following 49-residue polypeptide: Large ribosomal subunit protein bL33A (49 aa).

This sequence belongs to the bacterial ribosomal protein bL33 family.

The chain is Large ribosomal subunit protein bL33A from Levilactobacillus brevis (strain ATCC 367 / BCRC 12310 / CIP 105137 / JCM 1170 / LMG 11437 / NCIMB 947 / NCTC 947) (Lactobacillus brevis).